A 365-amino-acid polypeptide reads, in one-letter code: Endophilin-B1 (365 aa).

At methionine 1 the chain carries N-acetylmethionine. A membrane-binding amphipathic helix region spans residues 1-30 (MNIMDFNVKKLAADAGTFLSRAVQFTEEKL). The tract at residues 1-37 (MNIMDFNVKKLAADAGTFLSRAVQFTEEKLGQAEKTE) is required for membrane binding. In terms of domain architecture, BAR spans 27 to 261 (EEKLGQAEKT…LGSFPSNYLS (235 aa)). Phosphothreonine; by CDK5 is present on threonine 145. Residues 155 to 195 (YKTIAKERKLLQNKRLDLDAAKTRLKKAKAAETRNSSEQEL) are a coiled coil. One can recognise an SH3 domain in the interval 305–365 (SGSRKARVLY…VPITYLELLN (61 aa)).

The protein belongs to the endophilin family. In terms of assembly, homodimer, and heterodimer with SH3GLB2. Binds BAX; induction of apoptosis augments BAX binding. Binds DNM1, HTT, AMPH, BIN1 and ARFGAP1. Interacts with UVRAG; UVRAG bridges the interaction to BECN1 indicative for an association with the PI3K complex II (PI3KC3-C2). In terms of processing, phosphorylated at Thr-145 by CDK5; this phosphorylation is required for autophagy induction in starved neurons and facilitates homodimerization. Highly expressed in heart, skeletal muscle, kidney and placenta. Detected at lower levels in brain, colon, thymus, spleen, liver, small intestine, lung and peripheral blood leukocytes.

Its subcellular location is the cytoplasm. It is found in the golgi apparatus membrane. It localises to the mitochondrion outer membrane. The protein localises to the cytoplasmic vesicle. The protein resides in the autophagosome membrane. Its subcellular location is the midbody. In terms of biological role, may be required for normal outer mitochondrial membrane dynamics. Required for coatomer-mediated retrograde transport in certain cells. May recruit other proteins to membranes with high curvature. May promote membrane fusion. Involved in activation of caspase-dependent apoptosis by promoting BAX/BAK1 activation. Isoform 1 acts proapoptotic in fibroblasts. Involved in caspase-independent apoptosis during nutrition starvation and involved in the regulation of autophagy. Activates lipid kinase activity of PIK3C3 during autophagy probably by associating with the PI3K complex II (PI3KC3-C2). Associated with PI3KC3-C2 during autophagy may regulate the trafficking of ATG9A from the Golgi complex to the peripheral cytoplasm for the formation of autophagosomes by inducing Golgi membrane tubulation and fragmentation. Involved in regulation of degradative endocytic trafficking and cytokinesis, probably in the context of PI3KC3-C2. Isoform 2 acts antiapoptotic in neuronal cells; involved in maintenance of mitochondrial morphology and promotes neuronal viability. The sequence is that of Endophilin-B1 (SH3GLB1) from Homo sapiens (Human).